The sequence spans 196 residues: Holliday junction branch migration complex subunit RuvA (196 aa).

Residues 1–62 (MYEYINGLIT…ENDISLYGFI (62 aa)) are domain I. Positions 63–141 (DADEKALFNK…ELASKTGMVD (79 aa)) are domain II. Residues 142 to 148 (SSSNPEQ) form a flexible linker region. The tract at residues 148-196 (QSQALDDALEALLALGYTAKDVKAVAQIIGRNSDTTDGYIRSALKLLVK) is domain III.

It belongs to the RuvA family. Homotetramer. Forms an RuvA(8)-RuvB(12)-Holliday junction (HJ) complex. HJ DNA is sandwiched between 2 RuvA tetramers; dsDNA enters through RuvA and exits via RuvB. An RuvB hexamer assembles on each DNA strand where it exits the tetramer. Each RuvB hexamer is contacted by two RuvA subunits (via domain III) on 2 adjacent RuvB subunits; this complex drives branch migration. In the full resolvosome a probable DNA-RuvA(4)-RuvB(12)-RuvC(2) complex forms which resolves the HJ.

It localises to the cytoplasm. The RuvA-RuvB-RuvC complex processes Holliday junction (HJ) DNA during genetic recombination and DNA repair, while the RuvA-RuvB complex plays an important role in the rescue of blocked DNA replication forks via replication fork reversal (RFR). RuvA specifically binds to HJ cruciform DNA, conferring on it an open structure. The RuvB hexamer acts as an ATP-dependent pump, pulling dsDNA into and through the RuvAB complex. HJ branch migration allows RuvC to scan DNA until it finds its consensus sequence, where it cleaves and resolves the cruciform DNA. This is Holliday junction branch migration complex subunit RuvA from Leuconostoc mesenteroides subsp. mesenteroides (strain ATCC 8293 / DSM 20343 / BCRC 11652 / CCM 1803 / JCM 6124 / NCDO 523 / NBRC 100496 / NCIMB 8023 / NCTC 12954 / NRRL B-1118 / 37Y).